Here is a 290-residue protein sequence, read N- to C-terminus: DKKEPDMFLLSECKAPEENEKINLGCLVIGSQPLKISWEPKKSSIVEHVFPSEMRNGNYTMVLQVTVLASELNLNHTCTINKPKRKEKPFKFPESWDSQSSKRVTPTLQAKNHSTEATKAITTKKDIEGAMAPSNLTVNILTTSTHPEMSSWLLCEVSGFFPENIHLMWLGVHSKMKSTNFVTANPTAQPGGTFQTWSVLRLPVALSSSLDTYTCVVEHEASKTKLNASKSLAISGIVNTIQHSCIMDEQSDSYMDLEEENGLWPTMCTFVALFLLTLLYSGFVTFIKVK.

An Ig-like 1 domain is found at 5–105; sequence PDMFLLSECK…WDSQSSKRVT (101 aa). Cysteines 26 and 78 form a disulfide. 2 N-linked (GlcNAc...) asparagine glycosylation sites follow: N58 and N75. The tract at residues 89-111 is disordered; it reads PFKFPESWDSQSSKRVTPTLQAK. Positions 96 to 111 are enriched in polar residues; the sequence is WDSQSSKRVTPTLQAK. N112, N135, and N227 each carry an N-linked (GlcNAc...) asparagine glycan. The Ig-like 2 domain maps to 133–233; the sequence is PSNLTVNILT…TKLNASKSLA (101 aa). The helical transmembrane segment at 262-279 threads the bilayer; sequence GLWPTMCTFVALFLLTLL. The Cytoplasmic segment spans residues 280–290; the sequence is YSGFVTFIKVK.

In terms of tissue distribution, cell lines producing IgD contain several mRNA species for Ig delta chains. In plasmacytomas, the secreted form is the major component, and the membrane-bound form is a minor component. In spleen, however, the membrane-bound form is the major component. These two forms differ in their C-terminal segments.

The protein localises to the cell membrane. The polypeptide is Ig delta chain C region membrane-bound form (Mus musculus (Mouse)).